The sequence spans 463 residues: Cytoplasmic 60S subunit biogenesis factor SPCC550.15c (463 aa).

C2H2-type zinc fingers lie at residues 5–30 (FACT…DWHH) and 70–94 (QNCE…SKKH). The interval 109 to 136 (KLQSEDASSIASSTLSMGEPVVDSEIEE) is disordered. Over residues 113–124 (EDASSIASSTLS) the composition is skewed to polar residues. Ser150 and Ser155 each carry phosphoserine. Positions 155 to 189 (SLHGRESEPSKTELATSIPQSNEASKSHLFTQEPT) are disordered. A compositionally biased stretch (polar residues) spans 167-188 (ELATSIPQSNEASKSHLFTQEP). 2 consecutive C2H2-type zinc fingers follow at residues 208-231 (RDCL…KASH) and 259-283 (FTCL…QKGH). Over residues 317–338 (TVVEEDGSSGEGDWEDVSDDSD) the composition is skewed to acidic residues. Disordered regions lie at residues 317–341 (TVVE…DNSS) and 444–463 (ANKM…ALLQ).

Belongs to the REI1 family. Associates with nascent pre-60S particles that have not yet entered the translating pool, and is released from mature 60S subunits.

The protein localises to the cytoplasm. In terms of biological role, pre-60S-associated factor involved in the cytoplasmic maturation of the 60S subunit. Involved in the dissociation and recycling of other late pre-60S factors before newly synthesized large ribosomal subunits enter translation. In Schizosaccharomyces pombe (strain 972 / ATCC 24843) (Fission yeast), this protein is Cytoplasmic 60S subunit biogenesis factor SPCC550.15c.